The primary structure comprises 932 residues: 2-oxoglutarate dehydrogenase E1 component (932 aa).

It belongs to the alpha-ketoglutarate dehydrogenase family. Homodimer. Part of the 2-oxoglutarate dehydrogenase (OGDH) complex composed of E1 (2-oxoglutarate dehydrogenase), E2 (dihydrolipoamide succinyltransferase) and E3 (dihydrolipoamide dehydrogenase); the complex contains multiple copies of the three enzymatic components (E1, E2 and E3). It depends on thiamine diphosphate as a cofactor.

It catalyses the reaction N(6)-[(R)-lipoyl]-L-lysyl-[protein] + 2-oxoglutarate + H(+) = N(6)-[(R)-S(8)-succinyldihydrolipoyl]-L-lysyl-[protein] + CO2. Functionally, E1 component of the 2-oxoglutarate dehydrogenase (OGDH) complex which catalyzes the decarboxylation of 2-oxoglutarate, the first step in the conversion of 2-oxoglutarate to succinyl-CoA and CO(2). This is 2-oxoglutarate dehydrogenase E1 component from Staphylococcus aureus (strain JH9).